A 117-amino-acid polypeptide reads, in one-letter code: Large ribosomal subunit protein uL18 (117 aa).

Belongs to the universal ribosomal protein uL18 family. Part of the 50S ribosomal subunit; part of the 5S rRNA/L5/L18/L25 subcomplex. Contacts the 5S and 23S rRNAs.

Its function is as follows. This is one of the proteins that bind and probably mediate the attachment of the 5S RNA into the large ribosomal subunit, where it forms part of the central protuberance. The chain is Large ribosomal subunit protein uL18 from Yersinia enterocolitica serotype O:8 / biotype 1B (strain NCTC 13174 / 8081).